We begin with the raw amino-acid sequence, 1032 residues long: Probable ATP-dependent RNA helicase DDX46 (1032 aa).

Residues 1-24 are compositionally biased toward basic residues; the sequence is MGRESRHYRKRSASRGRSGSRSRS. The disordered stretch occupies residues 1–227; it reads MGRESRHYRK…TEMEDEELDP (227 aa). The N-myristoyl glycine moiety is linked to residue Gly-2. Residues 26 to 49 show a composition bias toward basic and acidic residues; that stretch reads SPSDKRSKRGDDRRSRSRDRDRRR. 2 stretches are compositionally biased toward basic residues: residues 50–73 and 81–103; these read ERSRSRDKRRSRSRDRKRLRRSRS and ERRRSRSRDRRRSRSRSRGRRSR. Basic and acidic residues predominate over residues 112 to 200; it reads KKTENRSRSK…EMKQGKKWSL (89 aa). Positions 152–197 form a coiled coil; that stretch reads DQNKLEEEMRKRKERVEKWREEQRKKAMENIGELKKEIEEMKQGKK. Residue Lys-186 forms a Glycyl lysine isopeptide (Lys-Gly) (interchain with G-Cter in SUMO2) linkage. The residue at position 199 (Ser-199) is a Phosphoserine. The span at 201 to 211 shows a compositional bias: acidic residues; that stretch reads EDDDDDEDDPA. The residue at position 263 (Lys-263) is an N6-acetyllysine. Tyr-294 bears the Phosphotyrosine mark. Ser-295 and Ser-296 each carry phosphoserine. Lys-325 participates in a covalent cross-link: Glycyl lysine isopeptide (Lys-Gly) (interchain with G-Cter in SUMO2). Ser-346 is subject to Phosphoserine. The Q motif signature appears at 372–400; sequence KSWVQCGISMKILNSLKKHGYEKPTPIQT. Residues 403–581 enclose the Helicase ATP-binding domain; sequence IPAIMSGRDL…RRILSKPIEV (179 aa). Residue 416-423 coordinates ATP; that stretch reads AKTGSGKT. The DEAD box signature appears at 529-532; it reads DEAD. In terms of domain architecture, Helicase C-terminal spans 592-753; it reads DVEQQVIVIE…AVPPDLEKLW (162 aa). An N6-acetyllysine modification is found at Lys-776. A Glycyl lysine isopeptide (Lys-Gly) (interchain with G-Cter in SUMO2) cross-link involves residue Lys-779. Ser-804 carries the post-translational modification Phosphoserine. N6-acetyllysine is present on Lys-904. Glycyl lysine isopeptide (Lys-Gly) (interchain with G-Cter in SUMO2) cross-links involve residues Lys-908 and Lys-916. Ser-929 is modified (phosphoserine).

This sequence belongs to the DEAD box helicase family. DDX46/PRP5 subfamily. As to quaternary structure, component of the 17S U2 SnRNP complex, a ribonucleoprotein complex that contains small nuclear RNA (snRNA) U2 and a number of specific proteins. Within the 17S U2 SnRNP complex, DDX46 is part of the SF3B subcomplex, which is required for 'A' complex assembly formed by the stable binding of U2 snRNP to the branchpoint sequence in pre-mRNA. Recruited to the 17S U2 SnRNP complex following release of DDX42; DDX42 and DDX46 bind the SF3B subcomplex in a competitive manner.

The protein resides in the nucleus speckle. Its subcellular location is the nucleus. It localises to the cajal body. It carries out the reaction ATP + H2O = ADP + phosphate + H(+). In terms of biological role, component of the 17S U2 SnRNP complex of the spliceosome, a large ribonucleoprotein complex that removes introns from transcribed pre-mRNAs. The 17S U2 SnRNP complex (1) directly participates in early spliceosome assembly and (2) mediates recognition of the intron branch site during pre-mRNA splicing by promoting the selection of the pre-mRNA branch-site adenosine, the nucleophile for the first step of splicing. Within the 17S U2 SnRNP complex, DDX46 plays essential roles during assembly of pre-spliceosome and proofreading of the branch site. The chain is Probable ATP-dependent RNA helicase DDX46 (Ddx46) from Mus musculus (Mouse).